A 356-amino-acid chain; its full sequence is Peptide chain release factor 1 (356 aa).

At Gln233 the chain carries N5-methylglutamine.

The protein belongs to the prokaryotic/mitochondrial release factor family. Methylated by PrmC. Methylation increases the termination efficiency of RF1.

It localises to the cytoplasm. In terms of biological role, peptide chain release factor 1 directs the termination of translation in response to the peptide chain termination codons UAG and UAA. The chain is Peptide chain release factor 1 (prfA) from Bacillus subtilis (strain 168).